The following is a 249-amino-acid chain: Cytokine-inducible SH2-containing protein (249 aa).

The interval 41–64 is disordered; it reads AFPEEPAPTFAAPEPDGSAPQTRD. An SH2 domain is found at 84-165; sequence WYWGSITASE…PDVVSLIQHY (82 aa). Residues 200 to 248 form the SOCS box domain; it reads KLLRPLGRRDSIPSLQHLCRLRINRCTTEVERLPLPRRMGDYLKQYPFQ.

Its pathway is protein modification; protein ubiquitination. Its function is as follows. SOCS family proteins form part of a classical negative feedback system that regulates cytokine signal transduction. CIS is involved in the negative regulation of cytokines that signal through the JAK-STAT5 pathway such as erythropoietin, prolactin and interleukin 3 (IL3) receptor. Inhibits STAT5 trans-activation by suppressing its tyrosine phosphorylation. May be a substrate-recognition component of a SCF-like ECS (Elongin BC-CUL2/5-SOCS-box protein) E3 ubiquitin-protein ligase complex which mediates the ubiquitination and subsequent proteasomal degradation of target proteins. The protein is Cytokine-inducible SH2-containing protein (CISH) of Gallus gallus (Chicken).